The following is a 375-amino-acid chain: Putative prophage phiRv2 integrase (375 aa).

Residues 75–153 (APFGEYAEGW…LLRAIMQTAL (79 aa)) form the Core-binding (CB) domain. One can recognise a Tyr recombinase domain in the interval 175–364 (HKIRPATLDE…AKGRDREIAA (190 aa)). Catalysis depends on residues Arg209, His316, Arg319, and His342. The O-(3'-phospho-DNA)-tyrosine intermediate role is filled by Tyr351.

The protein belongs to the 'phage' integrase family.

In terms of biological role, integrase is necessary for integration of the phage into the host genome by site-specific recombination. In conjunction with excisionase, integrase is also necessary for excision of the prophage from the host genome. In Mycobacterium tuberculosis (strain CDC 1551 / Oshkosh), this protein is Putative prophage phiRv2 integrase.